Consider the following 531-residue polypeptide: Efflux pump terG (531 aa).

Polar residues predominate over residues 1 to 11 (MSSSTLEGQET). The interval 1–27 (MSSSTLEGQETASHHSKNSPSRHGDDG) is disordered. The next 13 helical transmembrane spans lie at 86-106 (GKLS…ILIG), 117-137 (AIFV…GVSV), 145-165 (ILAR…ALAI), 179-199 (FAWF…FGPL), 207-227 (WIYW…IVAI), 249-269 (IDLL…FAWN), 280-300 (YVYV…YVEL), 319-339 (FVFG…FYVI), 351-371 (IQMA…ALIV), 380-400 (ASSI…LMAL), 402-422 (PVHS…TFAM), 447-467 (SVIM…AGTI), and 488-508 (TLWF…IFLL).

This sequence belongs to the major facilitator superfamily.

The protein localises to the cell membrane. Functionally, efflux pump that might be required for efficient secretion of terrein or other secondary metabolies produced by the terrein genne cluster. This is Efflux pump terG from Aspergillus terreus (strain NIH 2624 / FGSC A1156).